Reading from the N-terminus, the 197-residue chain is MTKLIGLTGGIATGKSTVSKLLATKLPIVDADKIAWQVEGPGQPTTQKIVAHFGQQAVLADGRLNRPWLGQLVFNDAQALQALTAITRLPIQYAMFEAIVAANQQQPDAIILDVPLLFESGWQHVCDQVLVVTASPAVVLQRLMARNHLSQQAAQARIDSQMPLAQKVARADVVIDNGANIDKTKAAVLKWLKTITK.

The 194-residue stretch at 4 to 197 folds into the DPCK domain; it reads LIGLTGGIAT…VLKWLKTITK (194 aa). 12–17 is a binding site for ATP; sequence ATGKST.

The protein belongs to the CoaE family.

The protein localises to the cytoplasm. The catalysed reaction is 3'-dephospho-CoA + ATP = ADP + CoA + H(+). The protein operates within cofactor biosynthesis; coenzyme A biosynthesis; CoA from (R)-pantothenate: step 5/5. In terms of biological role, catalyzes the phosphorylation of the 3'-hydroxyl group of dephosphocoenzyme A to form coenzyme A. The chain is Dephospho-CoA kinase from Lactiplantibacillus plantarum (strain ATCC BAA-793 / NCIMB 8826 / WCFS1) (Lactobacillus plantarum).